The following is an 806-amino-acid chain: Xylosyltransferase sqv-6 (806 aa).

The Cytoplasmic segment spans residues 1–11 (MLFNGTTKYRD). A helical; Signal-anchor for type II membrane protein membrane pass occupies residues 12 to 32 (YAIVISLFFLLNVYLLYNTAQ). The Lumenal portion of the chain corresponds to 33-806 (HTQVGNSKHI…GYDEDTQTLI (774 aa)). Residues C57 and C85 are joined by a disulfide bond. Residues N89 and N169 are each glycosylated (N-linked (GlcNAc...) asparagine). Cystine bridges form between C101-C445, C464-C478, and C466-C476. The WSC domain occupies 109 to 205 (IDQRIGCFLD…FNAVEIFRTG (97 aa)). UDP-alpha-D-xylose is bound by residues D264 and 293-295 (TIW). N325 carries N-linked (GlcNAc...) asparagine glycosylation. Residue 398-399 (DW) coordinates UDP-alpha-D-xylose. UDP-alpha-D-xylose is bound by residues S479 and 505-506 (RK). Residues N614, N655, and N719 are each glycosylated (N-linked (GlcNAc...) asparagine). Residues C772 and C778 are joined by a disulfide bond.

This sequence belongs to the glycosyltransferase 14 family. XylT subfamily. It depends on a divalent metal cation as a cofactor.

The protein localises to the endoplasmic reticulum membrane. Its subcellular location is the golgi apparatus membrane. The enzyme catalyses UDP-alpha-D-xylose + L-seryl-[protein] = 3-O-(beta-D-xylosyl)-L-seryl-[protein] + UDP + H(+). The protein operates within glycan metabolism; chondroitin sulfate biosynthesis. It participates in glycan metabolism; heparan sulfate biosynthesis. Its function is as follows. Catalyzes the first step in biosynthesis of glycosaminoglycan. Transfers D-xylose from UDP-D-xylose to specific serine residues of the core protein. Required for vulval morphogenesis and zygotic cytokinesis, suggesting that glycosaminoglycans play a central role in vulval morphogenesis. The sequence is that of Xylosyltransferase sqv-6 from Caenorhabditis elegans.